The following is a 344-amino-acid chain: Dihydroorotase (344 aa).

Positions 13 and 15 each coordinate Zn(2+). Substrate contacts are provided by residues 15–17 (HLR) and N41. Zn(2+) contacts are provided by K98, H135, and H173. K98 is modified (N6-carboxylysine). H135 is a binding site for substrate. A substrate-binding site is contributed by L218. Residue D247 coordinates Zn(2+). D247 is an active-site residue. Residues H251 and A263 each contribute to the substrate site.

This sequence belongs to the metallo-dependent hydrolases superfamily. DHOase family. Class II DHOase subfamily. In terms of assembly, homodimer. The cofactor is Zn(2+).

It catalyses the reaction (S)-dihydroorotate + H2O = N-carbamoyl-L-aspartate + H(+). Its pathway is pyrimidine metabolism; UMP biosynthesis via de novo pathway; (S)-dihydroorotate from bicarbonate: step 3/3. Functionally, catalyzes the reversible cyclization of carbamoyl aspartate to dihydroorotate. The chain is Dihydroorotase from Neisseria gonorrhoeae (strain ATCC 700825 / FA 1090).